The chain runs to 147 residues: DNA-directed RNA polymerase I subunit rpa14 (147 aa).

The segment at 71 to 147 (VQGPPTEELI…TQGVGEKEQS (77 aa)) is disordered. Positions 74–84 (PPTEELIIPPE) are enriched in low complexity. The span at 87 to 111 (LETKEEESLKHAREENDDLHLDKET) shows a compositional bias: basic and acidic residues. Basic residues predominate over residues 112-124 (KKRLKKEKKKAAR). Over residues 125 to 135 (REKEEARKAKA) the composition is skewed to basic and acidic residues.

As to quaternary structure, component of the RNA polymerase I (Pol I) complex consisting of 14 subunits. Part of a Pol I subcomplex consisting of the subunits A14 and A43. Interacts with rpa43. Post-translationally, phosphorylated.

It localises to the nucleus. Its subcellular location is the nucleolus. DNA-dependent RNA polymerase catalyzes the transcription of DNA into RNA using the four ribonucleoside triphosphates as substrates. Component of RNA polymerase I which synthesizes ribosomal RNA precursors. A14 seems to play a role in the stability of Pol I subunit A43 and association of rrn3 to Pol I. The protein is DNA-directed RNA polymerase I subunit rpa14 (ker1) of Schizosaccharomyces pombe (strain 972 / ATCC 24843) (Fission yeast).